Consider the following 184-residue polypeptide: Class II hydrophobin 6 (184 aa).

The signal sequence occupies residues methionine 1–alanine 16. 4 disulfide bridges follow: cysteine 122/cysteine 169, cysteine 130/cysteine 160, cysteine 131/cysteine 143, and cysteine 170/cysteine 181.

This sequence belongs to the cerato-ulmin hydrophobin family. As to quaternary structure, homotetramer. Further self-assembles to form highly ordered films at water-air interfaces through intermolecular interactions. In terms of tissue distribution, expressed in the mycellium.

It is found in the secreted. In terms of biological role, aerial growth, conidiation, and dispersal of filamentous fungi in the environment rely upon a capability of their secreting small amphipathic proteins called hydrophobins (HPBs) with low sequence identity. Class I can self-assemble into an outermost layer of rodlet bundles on aerial cell surfaces, conferring cellular hydrophobicity that supports fungal growth, development and dispersal; whereas Class II form highly ordered films at water-air interfaces through intermolecular interactions but contribute nothing to the rodlet structure. Hcf-6 is a class II hydrophobin that is involved in adhesion and in tomato plants infection. Is secreted to form a coat both around and beneath the fungus. In Passalora fulva (Tomato leaf mold), this protein is Class II hydrophobin 6.